Here is a 490-residue protein sequence, read N- to C-terminus: Delta(14)-sterol reductase (490 aa).

7 helical membrane-spanning segments follow: residues 23–43 (FGGP…VHVF), 80–100 (VFGL…ALSL), 136–156 (LAIL…WTFI), 160–180 (FAQI…FVYV), 230–250 (EFME…AFIA), 255–275 (LYGY…FYVF), and 324–344 (QLGA…YSIF). NADP(+)-binding positions include Lys351, Arg355, Ile378, Trp383, and 390 to 391 (NY). The chain crosses the membrane as a helical span at residues 436–456 (ARGWGIVFTYFYILYFAILLI). Residues Asp462, 466-470 (CSKKY), and Tyr477 contribute to the NADP(+) site.

The protein belongs to the ERG4/ERG24 family.

The protein resides in the membrane. It catalyses the reaction 4,4-dimethyl-5alpha-cholesta-8,24-dien-3beta-ol + NADP(+) = 4,4-dimethyl-5alpha-cholesta-8,14,24-trien-3beta-ol + NADPH + H(+). It participates in steroid biosynthesis; zymosterol biosynthesis; zymosterol from lanosterol: step 2/6. Its function is as follows. Reduces the C14=C15 double bond of 4,4-dimethyl-cholesta-8,14,24-trienol to produce 4,4-dimethyl-cholesta-8,24-dienol. The sequence is that of Delta(14)-sterol reductase (erg-3) from Neurospora crassa (strain ATCC 24698 / 74-OR23-1A / CBS 708.71 / DSM 1257 / FGSC 987).